Reading from the N-terminus, the 393-residue chain is MDAATLTYDTLRFAEFEDFPETSEPVWILGRKYSIFTEKDEILSDVASRLWFTYRKNFPAIGGTGPTSDTGWGCMLRCGQMIFAQALVCRHLGRDWRWTQRKRQPDSYFSVLNAFIDRKDSYYSIHQIAQMGVGEGKSIGQWYGPNTVAQVLKKLAVFDTWSSLAVHIAMDNTVVMEEIRRLCRTSVPCAGATAFPADSDRHCNGFPAGAEVTNRPSPWRPLVLLIPLRLGLTDINEAYVETLKHCFMMPQSLGVIGGKPNSAHYFIGYVGEELIYLDPHTTQPAVEPTDGCFIPDESFHCQHPPCRMSIAELDPSIAVGFFCKTEDDFNDWCQQVKKLSLLGGALPMFELVELQPSHLACPDVLNLSLDSSDVERLERFFDSEDEDFEILSL.

Residue Met-1 is modified to N-acetylmethionine. Position 34 is a phosphoserine; by PKB/AKT1 and PKB/AKT2 (Ser-34). Cys-74 (nucleophile) is an active-site residue. Cys-189 carries the post-translational modification S-nitrosocysteine. Catalysis depends on residues Asp-278 and His-280. 2 positions are modified to S-nitrosocysteine: Cys-292 and Cys-301. Cys-292 and Cys-361 are disulfide-bonded. At Ser-316 the chain carries Phosphoserine; by ULK1. Residue Ser-383 is modified to Phosphoserine; by STK26. Positions 388-391 (FEIL) match the LIR motif. A Phosphoserine modification is found at Ser-392.

It belongs to the peptidase C54 family. Interacts with PFKP; promoting phosphorylation of ATG4B at Ser-34. Interacts with GBP7. In terms of processing, phosphorylation at Ser-383 and Ser-392 promotes autophagy by increasing protein delipidation activity without affecting proteolytic activation of ATG8 proteins. Phosphorylation at Ser-316 by ULK1 inhibits autophagy by decreasing both proteolytic activation and delipidation activities. Phosphorylation at Ser-316 is dephosphorylated by protein phosphatase 2A (PP2A). Phosphorylation at Ser-34 by AKT2 promotes its hydrolase activity, leading to increased proteolytic activation and delipidation of ATG8 family proteins. Phosphorylation at Ser-34 by AKT1 promotes mitochondrial localization and inhibition of the F1F0-ATP synthase activity, leading to elevation of mitochondrial reactive oxygen species (ROS). Post-translationally, ubiquitinated by RNF5, leading to its degradation by the proteasome. S-nitrosylation at Cys-189 and Cys-292 in response to high glucose decreases both proteolytic activation and delipidation activities. In terms of processing, O-glycosylated by OGT, leading to increase protease activity, thereby promoting the proteolytic activation of ATG8 family proteins. Post-translationally, forms reversible intrachain disulfide bonds in response to oxidative stress. Forms interchain disulfide bonds, leading to formation of homooligomers in response to oxidation.

The protein localises to the cytoplasm. It is found in the cytosol. It localises to the cytoplasmic vesicle. Its subcellular location is the autophagosome. The protein resides in the endoplasmic reticulum. The protein localises to the mitochondrion. It catalyses the reaction [protein]-C-terminal L-amino acid-glycyl-phosphatidylethanolamide + H2O = [protein]-C-terminal L-amino acid-glycine + a 1,2-diacyl-sn-glycero-3-phosphoethanolamine. The enzyme catalyses [protein]-C-terminal L-amino acid-glycyl-phosphatidylserine + H2O = [protein]-C-terminal L-amino acid-glycine + a 1,2-diacyl-sn-glycero-3-phospho-L-serine. With respect to regulation, inhibited by N-ethylmaleimide. Redox-regulated during autophagy since reducing conditions activate ATG4A whereas an oxidizing environment such as the presence of H(2)O(2) inhibits its activity. The cysteine protease activity compounds is inhibited by styrylquinoline compounds 4-28 and LV-320. Cysteine protease that plays a key role in autophagy by mediating both proteolytic activation and delipidation of ATG8 family proteins. Required for canonical autophagy (macroautophagy), non-canonical autophagy as well as for mitophagy. The protease activity is required for proteolytic activation of ATG8 family proteins: cleaves the C-terminal amino acid of ATG8 proteins MAP1LC3A, MAP1LC3B, MAP1LC3C, GABARAPL1, GABARAPL2 and GABARAP, to reveal a C-terminal glycine. Exposure of the glycine at the C-terminus is essential for ATG8 proteins conjugation to phosphatidylethanolamine (PE) and insertion to membranes, which is necessary for autophagy. Protease activity is also required to counteract formation of high-molecular weight conjugates of ATG8 proteins (ATG8ylation): acts as a deubiquitinating-like enzyme that removes ATG8 conjugated to other proteins, such as ATG3. In addition to the protease activity, also mediates delipidation of ATG8 family proteins. Catalyzes delipidation of PE-conjugated forms of ATG8 proteins during macroautophagy. Also involved in non-canonical autophagy, a parallel pathway involving conjugation of ATG8 proteins to single membranes at endolysosomal compartments, by catalyzing delipidation of ATG8 proteins conjugated to phosphatidylserine (PS). Compared to other members of the family (ATG4A, ATG4C or ATG4C), constitutes the major protein for proteolytic activation of ATG8 proteins, while it displays weaker delipidation activity than other ATG4 paralogs. Involved in phagophore growth during mitophagy independently of its protease activity and of ATG8 proteins: acts by regulating ATG9A trafficking to mitochondria and promoting phagophore-endoplasmic reticulum contacts during the lipid transfer phase of mitophagy. This is Cysteine protease ATG4B from Homo sapiens (Human).